A 900-amino-acid chain; its full sequence is Probable beta-mannosidase (900 aa).

The first 21 residues, 1-21 (MRTSLVVCLFWLLFQLHTTHG), serve as a signal peptide directing secretion. N-linked (GlcNAc...) asparagine glycosylation is found at asparagine 38, asparagine 42, and asparagine 131. Residue glutamate 463 is the Proton donor of the active site. N-linked (GlcNAc...) asparagine glycosylation is found at asparagine 477, asparagine 576, asparagine 661, and asparagine 738.

It belongs to the glycosyl hydrolase 2 family.

The protein localises to the lysosome. It carries out the reaction Hydrolysis of terminal, non-reducing beta-D-mannose residues in beta-D-mannosides.. The polypeptide is Probable beta-mannosidase (Caenorhabditis elegans).